A 193-amino-acid chain; its full sequence is Fe/S biogenesis protein NfuA (193 aa).

C149 and C152 together coordinate [4Fe-4S] cluster.

Belongs to the NfuA family. Homodimer. Requires [4Fe-4S] cluster as cofactor.

Functionally, involved in iron-sulfur cluster biogenesis. Binds a 4Fe-4S cluster, can transfer this cluster to apoproteins, and thereby intervenes in the maturation of Fe/S proteins. Could also act as a scaffold/chaperone for damaged Fe/S proteins. This is Fe/S biogenesis protein NfuA from Psychromonas ingrahamii (strain DSM 17664 / CCUG 51855 / 37).